Reading from the N-terminus, the 130-residue chain is Succinate dehydrogenase assembly factor 3, mitochondrial (130 aa).

Residues 1 to 8 constitute a mitochondrion transit peptide; sequence MRPSLLRL.

It belongs to the complex I LYR family. SDHAF3 subfamily. In terms of assembly, interacts with the iron-sulfur protein subunit within the SDH catalytic dimer.

Its subcellular location is the mitochondrion matrix. Functionally, plays an essential role in the assembly of succinate dehydrogenase (SDH), an enzyme complex (also referred to as respiratory complex II) that is a component of both the tricarboxylic acid (TCA) cycle and the mitochondrial electron transport chain, and which couples the oxidation of succinate to fumarate with the reduction of ubiquinone (coenzyme Q) to ubiquinol. Promotes maturation of the iron-sulfur protein subunit of the SDH catalytic dimer, protecting it from the deleterious effects of oxidants. May act together with SDHAF1. This Gibberella zeae (strain ATCC MYA-4620 / CBS 123657 / FGSC 9075 / NRRL 31084 / PH-1) (Wheat head blight fungus) protein is Succinate dehydrogenase assembly factor 3, mitochondrial.